Reading from the N-terminus, the 316-residue chain is MIQATLLISLSCLSFYTLGSGVRRYDPGQGVTIQYLSLAPDTFDDAYVGCSEEMEEKAVLLLEKEMANHTRLRESWETAQKAWEQKRAGLTLPPGFRSQHGIAIMVYTNSSNTLYRELNQAVRTGGGSWESYMKHFPFKALHFYLTRALQLLRGGGGCSREPRQEVFRGVRRIHFVPKSVGDSIRLGQFASSSLDEAVACGFGSATFFSLRTCSGAPIQALSVFPEEREVLIPPYEVFVVSNFSKDGNKSLMTLSSSDQMCSHFNCAYLGEKKRPSCEFVPIGGQGDSLSKGAFSLLSWKTLLLASWGFQLLGAGL.

The first 23 residues, 1-23, serve as a signal peptide directing secretion; it reads MIQATLLISLSCLSFYTLGSGVR. Cysteine 50 and cysteine 266 are oxidised to a cystine. Asparagine 68 carries an N-linked (GlcNAc...) asparagine glycan. In terms of domain architecture, TR mART core spans 70–261; sequence TRLRESWETA…MTLSSSDQMC (192 aa). Tyrosine 107 serves as a coordination point for NAD(+). Asparagine 109 carries an N-linked (GlcNAc...) asparagine glycan. NAD(+)-binding residues include arginine 168 and glutamine 188. The active site involves arginine 168. Serine 191 is a catalytic residue. Serine 222 contributes to the NAD(+) binding site. Glutamate 229 is an active-site residue. 2 N-linked (GlcNAc...) asparagine glycosylation sites follow: asparagine 242 and asparagine 248.

The protein belongs to the Arg-specific ADP-ribosyltransferase family.

It is found in the secreted. Its subcellular location is the membrane. The enzyme catalyses L-arginyl-[protein] + NAD(+) = N(omega)-(ADP-D-ribosyl)-L-arginyl-[protein] + nicotinamide + H(+). This chain is Ecto-ADP-ribosyltransferase 5 (ART5), found in Bos taurus (Bovine).